Consider the following 158-residue polypeptide: 6,7-dimethyl-8-ribityllumazine synthase (158 aa).

5-amino-6-(D-ribitylamino)uracil-binding positions include phenylalanine 22, 57-59 (AVE), and 81-83 (AVI). 86–87 (GT) contributes to the (2S)-2-hydroxy-3-oxobutyl phosphate binding site. Histidine 89 acts as the Proton donor in catalysis. Phenylalanine 114 serves as a coordination point for 5-amino-6-(D-ribitylamino)uracil. Arginine 128 contributes to the (2S)-2-hydroxy-3-oxobutyl phosphate binding site.

This sequence belongs to the DMRL synthase family. As to quaternary structure, forms an icosahedral capsid composed of 60 subunits, arranged as a dodecamer of pentamers.

The catalysed reaction is (2S)-2-hydroxy-3-oxobutyl phosphate + 5-amino-6-(D-ribitylamino)uracil = 6,7-dimethyl-8-(1-D-ribityl)lumazine + phosphate + 2 H2O + H(+). It functions in the pathway cofactor biosynthesis; riboflavin biosynthesis; riboflavin from 2-hydroxy-3-oxobutyl phosphate and 5-amino-6-(D-ribitylamino)uracil: step 1/2. Catalyzes the formation of 6,7-dimethyl-8-ribityllumazine by condensation of 5-amino-6-(D-ribitylamino)uracil with 3,4-dihydroxy-2-butanone 4-phosphate. This is the penultimate step in the biosynthesis of riboflavin. In Shewanella pealeana (strain ATCC 700345 / ANG-SQ1), this protein is 6,7-dimethyl-8-ribityllumazine synthase.